The chain runs to 93 residues: Protein IDA-LIKE 4 (93 aa).

An N-terminal signal peptide occupies residues M1 to D35.

As to expression, expressed in mainly in buds. Lower levels in roots. Detected at the base of pedicel, in the floral and funicule abscission zones, in vascular tissues, in guard cells of young seedlings and in hydathodes.

The protein resides in the secreted. Its subcellular location is the extracellular space. In terms of biological role, may be involved in floral abscission. The polypeptide is Protein IDA-LIKE 4 (IDL4) (Arabidopsis thaliana (Mouse-ear cress)).